The following is a 446-amino-acid chain: MEETIEDPPTSAVLLDHCHFSQVIFSSVEKFYIPGGDVTCHYTFTQHFIPRRKDWIGIFRVGWKTTREYYTFMWVTLPIDLNNKSAKQQEVQFKAYYLPKDDEYYQFCYVDQDGVVRGASIPFQFRPENEEDILVVTTQGEVEEIEQHNKELCKENQELKDNCVSLQKQNSDMQAELQKKQEELETLQSINKKLELKVKEQKDYWETELLQLKEQNQKMSSENEKMGIRVDQLQAQLSTQEKEMEKLVQGDQDKTEQLEQLKKENDHLFLSLTEQRKDQKKLEQTVEQMKQNETTAMKKQQELMDENFDLSKRLSENKIICNALQREKERLEGENDLLKRENSRLLSYMGLDFNSLPYQVPTSDEGGAGQNPGLVYGNPYSGIQESSSPSPLSIKKCPICKADDICDHILEQQQMQPLCLNCPICDKIFPATEKQIFEDHVFCHSL.

A CLIR motif is present at residues 133 to 136 (ILVV). Residues 137–349 (TTQGEVEEIE…RENSRLLSYM (213 aa)) adopt a coiled-coil conformation. The LIR-like signature appears at 203-206 (DYWE). Residues 371–381 (NPGLVYGNPYS) are interaction with LGALS8. The interval 395–446 (KKCPICKADDICDHILEQQQMQPLCLNCPICDKIFPATEKQIFEDHVFCHSL) is interaction with MYO6. The segment at 419–444 (CLNCPICDKIFPATEKQIFEDHVFCH) adopts a UBZ1-type zinc-finger fold. Cysteine 422, cysteine 425, histidine 440, and histidine 444 together coordinate Zn(2+). Serine 445 is modified (phosphoserine).

Belongs to the CALCOCO family. In terms of assembly, dimer. Part of a complex consisting of CALCOCO2, TAX1BP1 and MYO6. Interacts with MYO6. Interacts with GEMIN4. Interacts with ATG8 family members MAP1LC3A, MAP1LC3B, GABARAP, GABARAPL1 and GABARAPL2. Interacts with ATG8 family member MAP1LC3C. Interacts with LGALS8. Interacts with TOM1; the interaction is indirect and is mediated by MYO6, which acts as a bridge between TOM1 and CALCOCO2. Interacts with AZI2.

It localises to the cytoplasm. The protein localises to the perinuclear region. It is found in the cytoskeleton. The protein resides in the cytoplasmic vesicle. Its subcellular location is the autophagosome membrane. In terms of biological role, xenophagy-specific receptor required for autophagy-mediated intracellular bacteria degradation. Acts as an effector protein of galectin-sensed membrane damage that restricts the proliferation of infecting pathogens upon entry into the cytosol by targeting LGALS8-associated bacteria for autophagy. Initially orchestrates bacteria targeting to autophagosomes and subsequently ensures pathogen degradation by regulating pathogen-containing autophagosome maturation. Bacteria targeting to autophagosomes relies on its interaction with MAP1LC3A, MAP1LC3B and/or GABARAPL2, whereas regulation of pathogen-containing autophagosome maturation requires the interaction with MAP3LC3C. May play a role in ruffle formation and actin cytoskeleton organization and seems to negatively regulate constitutive secretion. The protein is Calcium-binding and coiled-coil domain-containing protein 2 of Pongo abelii (Sumatran orangutan).